Reading from the N-terminus, the 347-residue chain is Quinolinate synthase (347 aa).

Residues H47 and S68 each coordinate iminosuccinate. C113 contacts [4Fe-4S] cluster. Residues 139 to 141 and S156 contribute to the iminosuccinate site; that span reads YAN. C200 provides a ligand contact to [4Fe-4S] cluster. Iminosuccinate-binding positions include 226-228 and T243; that span reads HPE. [4Fe-4S] cluster is bound at residue C297.

The protein belongs to the quinolinate synthase family. Type 1 subfamily. It depends on [4Fe-4S] cluster as a cofactor.

The protein localises to the cytoplasm. It carries out the reaction iminosuccinate + dihydroxyacetone phosphate = quinolinate + phosphate + 2 H2O + H(+). It functions in the pathway cofactor biosynthesis; NAD(+) biosynthesis; quinolinate from iminoaspartate: step 1/1. In terms of biological role, catalyzes the condensation of iminoaspartate with dihydroxyacetone phosphate to form quinolinate. The protein is Quinolinate synthase of Escherichia coli O45:K1 (strain S88 / ExPEC).